The following is a 152-amino-acid chain: uncharacterized protein (152 aa).

Basic residues predominate over residues methionine 1–lysine 13. Disordered regions lie at residues methionine 1–arginine 28 and asparagine 75–glutamate 152. Composition is skewed to pro residues over residues proline 15–proline 26 and proline 80–proline 92. The span at aspartate 133–glutamate 152 shows a compositional bias: acidic residues.

This is an uncharacterized protein from Pan troglodytes (Chimpanzee).